We begin with the raw amino-acid sequence, 152 residues long: D-aminoacyl-tRNA deacylase 1 (152 aa).

A Gly-cisPro motif, important for rejection of L-amino acids motif is present at residues 140-141 (GP).

The protein belongs to the DTD family. In terms of assembly, homodimer.

Its subcellular location is the cytoplasm. It catalyses the reaction glycyl-tRNA(Ala) + H2O = tRNA(Ala) + glycine + H(+). It carries out the reaction a D-aminoacyl-tRNA + H2O = a tRNA + a D-alpha-amino acid + H(+). In terms of biological role, an aminoacyl-tRNA editing enzyme that deacylates mischarged D-aminoacyl-tRNAs. Hydrolyzes correctly charged, achiral, glycyl-tRNA(Gly). Deacylates mischarged D.melanogaster and E.coli glycyl-tRNA(Ala), protecting cells against glycine mischarging by AlaRS. Acts via tRNA-based rather than protein-based catalysis; rejects L-amino acids rather than detecting D-amino acids in the active site. By recycling D-aminoacyl-tRNA to D-amino acids and free tRNA molecules, this enzyme counteracts the toxicity associated with the formation of D-aminoacyl-tRNA entities in vivo and helps enforce protein L-homochirality. This chain is D-aminoacyl-tRNA deacylase 1 (dtd1), found in Leishmania major.